The sequence spans 184 residues: Rhox homeobox family member 1 (184 aa).

Positions 26–104 are disordered; the sequence is QLGAASSAEG…GPQPENMQPR (79 aa). Positions 88-99 are enriched in low complexity; that stretch reads PAQAAMEGPQPE. Positions 103–162 form a DNA-binding region, homeobox; that stretch reads PRTRRTKFTLLQVEELESVFRHTQYPDVPTRRELAENLGVTEDKVRVWFKNKRARCRRHQ. The short motif at 155–164 is the Nuclear localization signal element; the sequence is RARCRRHQRE.

It belongs to the paired-like homeobox family. PEPP subfamily. Does not interact with itself. Ovary, testis and epididymis. Also detected in the prostate and the mammary gland. Expressed in many tumor cell lines derived from acute lymphocytic leukemia, prostate, endometrial adenocarcinoma, melanoma, bladder carcinoma, colon carcinoma, erythroleukemia and breast carcinoma. Not expressed in placenta. In testis, mainly expressed in germ cells, but also detected in somatic cells such as Sertoli cells, Leydig cells and peritubular cells.

Its subcellular location is the nucleus. Transcription factor maybe involved in reproductive processes. Modulates expression of target genes encoding proteins involved in processes relevant to spermatogenesis. The protein is Rhox homeobox family member 1 of Homo sapiens (Human).